A 238-amino-acid polypeptide reads, in one-letter code: MSKRKRVLVKFSGEALAGENGFGIDTAVLKFIASEIKELIENDIEVGIVIGGGNIVRGVSAAKDGIIKRTSGDHMGMLATVINSIAMREALERSGLEVRVQSAIKMEAICETFIVGRAQRHLEKGRVVIFAAGTGNPFFTTDTAATLRAIEIGSDMIIKATKVDGVYDKDPKKFKDAKLLKSLNYEKAMSDDIKVMDDTAIALAKDNALPILVCNMFKAGNLLKIINEEEAALYSVVK.

Position 10–13 (10–13 (KFSG)) interacts with ATP. The interval 18 to 23 (GENGFG) is involved in allosteric activation by GTP. G52 provides a ligand contact to UMP. Residues G53 and R57 each coordinate ATP. Residues D73 and 134–141 (TGNPFFTT) each bind UMP. The ATP site is built by T161, Y167, and D170.

This sequence belongs to the UMP kinase family. Homohexamer.

It localises to the cytoplasm. The enzyme catalyses UMP + ATP = UDP + ADP. The protein operates within pyrimidine metabolism; CTP biosynthesis via de novo pathway; UDP from UMP (UMPK route): step 1/1. Allosterically activated by GTP. Inhibited by UTP. Catalyzes the reversible phosphorylation of UMP to UDP. The protein is Uridylate kinase of Campylobacter concisus (strain 13826).